We begin with the raw amino-acid sequence, 73 residues long: MLLTISDFLFLSLTFSRYARMRDSRPWSDRKNNYSGPQFTYPPEKAPPEKLIKWNNEGSPIFEMPAEGGHIEP.

A signal peptide spans 1-14 (MLLTISDFLFLSLT). Residues 25-48 (RPWSDRKNNYSGPQFTYPPEKAPP) form a disordered region.

Its subcellular location is the secreted. In terms of biological role, displays antimicrobial activity against the Gram-positive bacterium S.aureus ATCC 2592, the Gram-negative bacteria E.coli ATCC 25922 and P.aeruginosa ATCC 27853, and the fungus C.albicans ATCC 2002. Displays stronger activity against P.aeruginosa and S.aureus than E.coli. Displays very weak hemolytic activity. The polypeptide is Antimicrobial peptide lumbricin-PG (Metaphire guillelmi (Earthworm)).